We begin with the raw amino-acid sequence, 197 residues long: dTTP/UTP pyrophosphatase (197 aa).

Asp70 serves as the catalytic Proton acceptor.

This sequence belongs to the Maf family. YhdE subfamily. A divalent metal cation serves as cofactor.

Its subcellular location is the cytoplasm. The enzyme catalyses dTTP + H2O = dTMP + diphosphate + H(+). The catalysed reaction is UTP + H2O = UMP + diphosphate + H(+). Nucleoside triphosphate pyrophosphatase that hydrolyzes dTTP and UTP. May have a dual role in cell division arrest and in preventing the incorporation of modified nucleotides into cellular nucleic acids. The protein is dTTP/UTP pyrophosphatase (yceF2) of Shigella sonnei (strain Ss046).